Here is a 91-residue protein sequence, read N- to C-terminus: Ragulator complex protein LAMTOR5 homolog (91 aa).

Belongs to the LAMTOR5 family. As to quaternary structure, part of the Ragulator complex.

The protein localises to the cytoplasm. It is found in the lysosome. Functionally, regulator of the TOR pathway, a signaling cascade that promotes cell growth in response to growth factors, energy levels, and amino acids. As part of the Ragulator complex, may activate the TOR signaling cascade in response to amino acids. This is Ragulator complex protein LAMTOR5 homolog from Nematostella vectensis (Starlet sea anemone).